The primary structure comprises 126 residues: Precursor of CEP2 (126 aa).

The signal sequence occupies residues 1-19 (MKLFIITVVTILTISRVFD). The propeptide occupies 20–80 (KTPATTEARK…ENNLKNRFIN (61 aa)). Hydroxyproline occurs at positions 84 and 87. A propeptide spanning residues 96 to 105 (PRVLNNKFTN) is cleaved from the precursor. 3 positions are modified to hydroxyproline: proline 109, proline 112, and proline 116. A propeptide spanning residues 121 to 126 (PGVVNV) is cleaved from the precursor.

Belongs to the C-terminally encoded plant signaling peptide (CEP) family. In terms of assembly, interacts with CEP receptors (e.g. CEPR1 and CEPR2). The mature small signaling peptide is generated by proteolytic processing of the longer precursor. In terms of tissue distribution, mostly expressed in roots. Present in cotyledons, shoot apical meristem (SAM), leaves, inflorescence stems and flowers.

The protein localises to the secreted. It localises to the extracellular space. The protein resides in the apoplast. Extracellular signaling peptide that represses primary root growth rate. Negatively regulates the number of leaves and flowering, and modulates leaf morphology. Regulates systemic nitrogen (N)-demand signaling. Mediates up-regulation of genes involved in N uptake and assimilation pathways. This chain is Precursor of CEP2, found in Arabidopsis thaliana (Mouse-ear cress).